The sequence spans 172 residues: Putative phosphoesterase BcerKBAB4_1135 (172 aa).

Residue histidine 34 is the Proton donor of the active site. Short sequence motifs (HXTX) lie at residues 34 to 37 and 115 to 118; these read HITL and HLTI. Histidine 115 acts as the Proton acceptor in catalysis.

This sequence belongs to the 2H phosphoesterase superfamily. YjcG family.

The chain is Putative phosphoesterase BcerKBAB4_1135 from Bacillus mycoides (strain KBAB4) (Bacillus weihenstephanensis).